The chain runs to 212 residues: Pyridoxine/pyridoxamine 5'-phosphate oxidase (212 aa).

Substrate is bound by residues 8-11 and Lys-66; that span reads RREY. FMN-binding positions include 61–66, 76–77, Arg-82, Lys-83, and Gln-105; these read RIVLLK and FT. Tyr-123, Arg-127, and Ser-131 together coordinate substrate. FMN is bound by residues 140–141 and Trp-185; that span reads QS. 191-193 is a binding site for substrate; the sequence is RLH. Arg-195 is a binding site for FMN.

Belongs to the pyridoxamine 5'-phosphate oxidase family. In terms of assembly, homodimer. FMN is required as a cofactor.

The enzyme catalyses pyridoxamine 5'-phosphate + O2 + H2O = pyridoxal 5'-phosphate + H2O2 + NH4(+). It carries out the reaction pyridoxine 5'-phosphate + O2 = pyridoxal 5'-phosphate + H2O2. It functions in the pathway cofactor metabolism; pyridoxal 5'-phosphate salvage; pyridoxal 5'-phosphate from pyridoxamine 5'-phosphate: step 1/1. It participates in cofactor metabolism; pyridoxal 5'-phosphate salvage; pyridoxal 5'-phosphate from pyridoxine 5'-phosphate: step 1/1. Its function is as follows. Catalyzes the oxidation of either pyridoxine 5'-phosphate (PNP) or pyridoxamine 5'-phosphate (PMP) into pyridoxal 5'-phosphate (PLP). The sequence is that of Pyridoxine/pyridoxamine 5'-phosphate oxidase from Shewanella sp. (strain MR-4).